The sequence spans 983 residues: Seizure protein 6 homolog (983 aa).

A signal peptide spans 1-19 (MRPAALLLLPSLLALLVHG). Disordered stretches follow at residues 80 to 132 (GQEK…WSLE) and 148 to 194 (PGMA…QTTG). Over residues 101-112 (NQDSRPVFTSPT) the composition is skewed to polar residues. The span at 154–167 (TPGPGERPNTPPPS) shows a compositional bias: pro residues. Residue Asn-278 is glycosylated (N-linked (GlcNAc...) asparagine). The 60-residue stretch at 344–403 (LSCHFPRRPAYGAVTVTSLHPGGSARFRCATGYQLKGARLLTCLNATQPFWDSQEPVCIA) folds into the Sushi 1 domain. Cystine bridges form between Cys-346-Cys-386, Cys-372-Cys-401, Cys-405-Cys-432, Cys-521-Cys-563, Cys-548-Cys-578, Cys-582-Cys-608, Cys-699-Cys-741, Cys-727-Cys-754, Cys-760-Cys-802, Cys-788-Cys-819, Cys-827-Cys-869, and Cys-855-Cys-884. Asn-388, Asn-425, and Asn-530 each carry an N-linked (GlcNAc...) asparagine glycan. One can recognise a CUB 1 domain in the interval 405 to 516 (CGGVIRNATT…AGMALRYEAF (112 aa)). One can recognise a Sushi 2 domain in the interval 519–580 (GHCYEPFVKY…WNETEPACRA (62 aa)). One can recognise a CUB 2 domain in the interval 582 to 693 (CSGETTDSAG…QGFVIHFFEV (112 aa)). 3 consecutive Sushi domains span residues 697-756 (DTCP…SCQR), 758-821 (TSCL…KCLL), and 825-886 (KPCH…ICRA). Residues 915–935 (LAAAIFLPLVAMALLVGGVYL) traverse the membrane as a helical segment.

The protein belongs to the SEZ6 family.

The protein resides in the cell membrane. Functionally, may play a role in cell-cell recognition and in neuronal membrane signaling. Seems to be important for the achievement of the necessary balance between dendrite elongation and branching during the elaboration of a complex dendritic arbor. Involved in the development of appropriate excitatory synaptic connectivity. This Bos taurus (Bovine) protein is Seizure protein 6 homolog (SEZ6).